Here is a 910-residue protein sequence, read N- to C-terminus: Valine--tRNA ligase (910 aa).

The 'HIGH' region motif lies at 45–55 (PNVTGSLHMGH). Residues 554-558 (KMSKS) carry the 'KMSKS' region motif. Lys557 is a binding site for ATP. A coiled-coil region spans residues 842–910 (DLQAEAARLA…TAESRIRDAS (69 aa)).

This sequence belongs to the class-I aminoacyl-tRNA synthetase family. ValS type 1 subfamily. As to quaternary structure, monomer.

It localises to the cytoplasm. The catalysed reaction is tRNA(Val) + L-valine + ATP = L-valyl-tRNA(Val) + AMP + diphosphate. Functionally, catalyzes the attachment of valine to tRNA(Val). As ValRS can inadvertently accommodate and process structurally similar amino acids such as threonine, to avoid such errors, it has a 'posttransfer' editing activity that hydrolyzes mischarged Thr-tRNA(Val) in a tRNA-dependent manner. This is Valine--tRNA ligase from Brucella melitensis biotype 1 (strain ATCC 23456 / CCUG 17765 / NCTC 10094 / 16M).